A 108-amino-acid polypeptide reads, in one-letter code: Putative pterin-4-alpha-carbinolamine dehydratase (108 aa).

It belongs to the pterin-4-alpha-carbinolamine dehydratase family.

It catalyses the reaction (4aS,6R)-4a-hydroxy-L-erythro-5,6,7,8-tetrahydrobiopterin = (6R)-L-erythro-6,7-dihydrobiopterin + H2O. The chain is Putative pterin-4-alpha-carbinolamine dehydratase from Bordetella avium (strain 197N).